The primary structure comprises 328 residues: Sphingolipid delta(4)-desaturase DES1-like (328 aa).

3 helical membrane passes run 50–70, 78–98, and 114–134; these read PLAF…ATLL, ILTV…LAIH, and WLGI…FQKY. Residues 98–102 carry the Histidine box-1 motif; the sequence is HELSH. The Histidine box-2 motif lies at 135-139; sequence HLEHH. Transmembrane regions (helical) follow at residues 164-184, 192-212, and 217-237; these read LSKS…PLFL, WEFT…YFFG, and AYLI…GHFI. Positions 266–270 match the Histidine box-3 motif; it reads HNEHH.

It belongs to the fatty acid desaturase type 1 family. DEGS subfamily.

The protein resides in the endoplasmic reticulum membrane. It carries out the reaction an N-acylsphinganine + 2 Fe(II)-[cytochrome b5] + O2 + 2 H(+) = an N-acylsphing-4-enine + 2 Fe(III)-[cytochrome b5] + 2 H2O. Functionally, sphingolipid-delta-4-desaturase required for the biosynthesis of delta-4-unsaturated sphingolipids and derivatives. This Oryza sativa subsp. japonica (Rice) protein is Sphingolipid delta(4)-desaturase DES1-like.